Reading from the N-terminus, the 943-residue chain is Lactoferrin-binding protein A (943 aa).

The signal sequence occupies residues 1–27; that stretch reads MNKKHGFPLTLTALAIATAFPAYAAQA. Residues 52–178 enclose the TBDR plug domain; that stretch reads RRSKEATGLG…LGGAVAFRTK (127 aa). Residues 189-943 form the TBDR beta-barrel domain; that stretch reads SWGIQAKTAY…NFSLALEMKF (755 aa). Residues 926–943 carry the TonB C-terminal box motif; it reads GRYAAPGRNFSLALEMKF.

It belongs to the TonB-dependent receptor family.

The protein resides in the cell outer membrane. Unknown. May be an iron-siderophore receptor. This is Lactoferrin-binding protein A (lbpA) from Neisseria meningitidis serogroup B (strain ATCC BAA-335 / MC58).